The following is a 387-amino-acid chain: Succinate--CoA ligase [ADP-forming] subunit beta (387 aa).

Residues Lys-46, 53-55 (GRG), Glu-99, Ala-102, and Glu-107 contribute to the ATP site. Mg(2+) contacts are provided by Asn-199 and Asp-213. Residues Asn-264 and 321 to 323 (GIV) contribute to the substrate site.

Belongs to the succinate/malate CoA ligase beta subunit family. In terms of assembly, heterotetramer of two alpha and two beta subunits. Mg(2+) is required as a cofactor.

It catalyses the reaction succinate + ATP + CoA = succinyl-CoA + ADP + phosphate. The catalysed reaction is GTP + succinate + CoA = succinyl-CoA + GDP + phosphate. It participates in carbohydrate metabolism; tricarboxylic acid cycle; succinate from succinyl-CoA (ligase route): step 1/1. Its function is as follows. Succinyl-CoA synthetase functions in the citric acid cycle (TCA), coupling the hydrolysis of succinyl-CoA to the synthesis of either ATP or GTP and thus represents the only step of substrate-level phosphorylation in the TCA. The beta subunit provides nucleotide specificity of the enzyme and binds the substrate succinate, while the binding sites for coenzyme A and phosphate are found in the alpha subunit. The sequence is that of Succinate--CoA ligase [ADP-forming] subunit beta from Campylobacter jejuni subsp. doylei (strain ATCC BAA-1458 / RM4099 / 269.97).